We begin with the raw amino-acid sequence, 406 residues long: FBD-associated F-box protein At1g60410 (406 aa).

Positions 9–59 (KDRLSDLPCHLLCRILSNLSTKESVRTSVLSPRWSNLWSLVSVLDLDFQDF) constitute an F-box domain. Positions 355-405 (MEEIKLSPVPQCVLSSLDFLQLKAPSTPSKMKLATYFRKKCTRLTKMLLSG) constitute an FBD domain.

The polypeptide is FBD-associated F-box protein At1g60410 (Arabidopsis thaliana (Mouse-ear cress)).